Consider the following 155-residue polypeptide: Small ribosomal subunit protein uS9 (155 aa).

This sequence belongs to the universal ribosomal protein uS9 family.

The protein is Small ribosomal subunit protein uS9 of Rhizobium meliloti (strain 1021) (Ensifer meliloti).